The chain runs to 1021 residues: Probable calcium-transporting ATPase 6, plasma membrane-type (1021 aa).

At 1 to 155 (MEGGRSWSIE…RSFWMFVWDA (155 aa)) the chain is on the cytoplasmic side. The next 2 helical transmembrane spans lie at 156–176 (LHDL…VVGL) and 181–201 (WPMG…VVLV). At 202-241 (TATSDYQQARKFMELDREKQKIYIRVTRDKKTKEVLVHDL) the chain is on the cytoplasmic side. Helical transmembrane passes span 242-262 (VVGD…GLFI) and 338-358 (VATI…LVLL). Residues 359–384 (ARFLADKGMHVGLLNWSANDALTIVN) are Cytoplasmic-facing. Residues 385–405 (YFAIAVTIIVVAVPEGLPLAV) form a helical membrane-spanning segment. Asp441 (4-aspartylphosphate intermediate) is an active-site residue. Asp740 and Asp744 together coordinate Mg(2+). The chain crosses the membrane as a helical span at residues 807-827 (IVALIVNFVSACIIGSAPLTA). Residues 828–829 (VQ) lie on the Cytoplasmic side of the membrane. The next 2 helical transmembrane spans lie at 830 to 850 (LLWV…TEPP) and 879 to 899 (GLYQ…LLSI). Residues 900-942 (EGPQSDKTINTLIFNSFVFCQVFNEINCREMEKINVLQGIFRN) lie on the Cytoplasmic side of the membrane. 2 helical membrane passes run 943 to 963 (WIFV…VEFL) and 974 to 994 (GELW…SVIL). Residues 995–1021 (KCIPVEFNKTNTKPHGYELIPEGPEIL) lie on the Cytoplasmic side of the membrane.

This sequence belongs to the cation transport ATPase (P-type) (TC 3.A.3) family. Type IIB subfamily.

The protein resides in the membrane. The enzyme catalyses Ca(2+)(in) + ATP + H2O = Ca(2+)(out) + ADP + phosphate + H(+). Activated by calmodulin. Functionally, this magnesium-dependent enzyme catalyzes the hydrolysis of ATP coupled with the translocation of calcium from the cytosol out of the cell, into the endoplasmic reticulum, or into organelles. The protein is Probable calcium-transporting ATPase 6, plasma membrane-type of Oryza sativa subsp. japonica (Rice).